The following is a 340-amino-acid chain: Delta(1)-pyrroline-2-carboxylate reductase 1 (340 aa).

The Charge relay system role is filled by S50. Catalysis depends on H51, which acts as the Proton donor. R55 is a substrate binding site. Position 123–127 (123–127) interacts with NADP(+); sequence HFSAL. T163 serves as a coordination point for substrate. 181-183 serves as a coordination point for NADP(+); it reads DFA. 189-190 contacts substrate; the sequence is RG. D191 acts as the Charge relay system in catalysis. NADP(+) contacts are provided by residues 232 to 233 and 307 to 313; these read HK and RLPSQRR.

It belongs to the LDH2/MDH2 oxidoreductase family. In terms of assembly, homodimer.

The enzyme catalyses L-proline + NAD(+) = 1-pyrroline-2-carboxylate + NADH + H(+). It carries out the reaction L-proline + NADP(+) = 1-pyrroline-2-carboxylate + NADPH + H(+). Its function is as follows. Catalyzes the reduction of Delta(1)-pyrroline-2-carboxylate (Pyr2C) to L-proline, using NADPH as the electron donor. May be involved in a degradation pathway that converts trans-3-hydroxy-L-proline (t3LHyp) to L-proline. The sequence is that of Delta(1)-pyrroline-2-carboxylate reductase 1 from Burkholderia ambifaria (strain ATCC BAA-244 / DSM 16087 / CCUG 44356 / LMG 19182 / AMMD) (Burkholderia cepacia (strain AMMD)).